Reading from the N-terminus, the 871-residue chain is Chaperone protein ClpB 1 (871 aa).

One can recognise a Clp R domain in the interval 6-147 (PNQFTEKAWA…REAIQQIRGS (142 aa)). 2 repeat regions span residues 9-73 (FTEK…ISRQ) and 84-147 (LGQS…IRGS). The interval 160–341 (AALEKYGRDL…RRFQQVYVDQ (182 aa)) is NBD1. Residue 207–214 (GEPGVGKT) coordinates ATP. A linker region spans residues 342-550 (PSVEDTISIL…IAEIISKWTG (209 aa)). A coiled-coil region spans residues 392–526 (IDLVDEAAAK…AEAKLREIQV (135 aa)). An NBD2 region spans residues 560–771 (EAQKLLHLEE…RVDEFIIFHS (212 aa)). An ATP-binding site is contributed by 610-617 (GPTGVGKT). Residues 772–871 (LRKDQLRQIV…FRRQVELATV (100 aa)) form a C-terminal region.

Belongs to the ClpA/ClpB family. As to quaternary structure, homohexamer. The oligomerization is ATP-dependent.

The protein localises to the cytoplasm. Functionally, part of a stress-induced multi-chaperone system, it is involved in the recovery of the cell from heat-induced damage, in cooperation with DnaK, DnaJ and GrpE. Acts before DnaK, in the processing of protein aggregates. Protein binding stimulates the ATPase activity; ATP hydrolysis unfolds the denatured protein aggregates, which probably helps expose new hydrophobic binding sites on the surface of ClpB-bound aggregates, contributing to the solubilization and refolding of denatured protein aggregates by DnaK. This Thermosynechococcus vestitus (strain NIES-2133 / IAM M-273 / BP-1) protein is Chaperone protein ClpB 1 (clpB1).